A 151-amino-acid polypeptide reads, in one-letter code: UPF0178 protein YaiI (151 aa).

This sequence belongs to the UPF0178 family.

The protein is UPF0178 protein YaiI of Salmonella arizonae (strain ATCC BAA-731 / CDC346-86 / RSK2980).